Consider the following 380-residue polypeptide: Cytochrome b (380 aa).

Transmembrane regions (helical) follow at residues 34–54, 78–99, 114–134, and 179–199; these read FGSL…LLAM, WLIR…YLHI, WNTG…GYVL, and FFAL…IHLT. Residues His84 and His98 each contribute to the heme b site. His183 and His197 together coordinate heme b. Residue His202 coordinates a ubiquinone. Transmembrane regions (helical) follow at residues 227-247, 289-309, 321-341, and 348-368; these read LKDI…ALFS, LGGV…PFLH, LSQL…WVGS, and FIII…ILFP.

Belongs to the cytochrome b family. In terms of assembly, the cytochrome bc1 complex contains 11 subunits: 3 respiratory subunits (MT-CYB, CYC1 and UQCRFS1), 2 core proteins (UQCRC1 and UQCRC2) and 6 low-molecular weight proteins (UQCRH/QCR6, UQCRB/QCR7, UQCRQ/QCR8, UQCR10/QCR9, UQCR11/QCR10 and a cleavage product of UQCRFS1). This cytochrome bc1 complex then forms a dimer. It depends on heme b as a cofactor.

The protein localises to the mitochondrion inner membrane. In terms of biological role, component of the ubiquinol-cytochrome c reductase complex (complex III or cytochrome b-c1 complex) that is part of the mitochondrial respiratory chain. The b-c1 complex mediates electron transfer from ubiquinol to cytochrome c. Contributes to the generation of a proton gradient across the mitochondrial membrane that is then used for ATP synthesis. The polypeptide is Cytochrome b (MT-CYB) (Calonectris leucomelas (Streaked shearwater)).